Consider the following 277-residue polypeptide: MQNNEQTEYKTVRGLTRGLMLLNMLNKLDGGASVGLLAELSGLHRTTVRRLLETLQEEGYVRRSPSDDSFRLTIKVRQLSEGFRDEQWISALAAPLLGDLLREVVWPTDVSTLDVDAMVVRETTHRFSRLSFHRAMVGRRLPLLKTASGLTWLAFCPEQDRKELIEMLASRPGDDYQLAREPLKLEAILARARKEGYGQNYRGWDQEEKIASIAVPLRSEQRVIGCLNLVYMASAMTIEQAAEKHLPALQRVAKQIEEGVESQAILVAGRRSGMHLR.

In terms of domain architecture, HTH iclR-type spans 12-74 (VRGLTRGLML…PSDDSFRLTI (63 aa)). The segment at residues 34–53 (VGLLAELSGLHRTTVRRLLE) is a DNA-binding region (H-T-H motif). Residues 89–262 (ISALAAPLLG…AKQIEEGVES (174 aa)) enclose the IclR-ED domain.

Activator of the mhpABCDFE operon coding for components of the 3-hydroxyphenylpropionate degradation pathway. This chain is DNA-binding transcriptional activator MhpR (mhpR), found in Escherichia coli (strain K12).